A 417-amino-acid polypeptide reads, in one-letter code: MLRNDSHRAVSPEDGQGRVDDGRPHLACVGALARGFMHIWLQAATLGFAGSVVMSRGPYANAASGAFAVGCAVLGFMRAPPPLARPTARIYAWLKLAAGGAALVLWSLGEPGTQPGAPAPGPATQCLALGAAYAALLVLADDVYPLFLLAPGPLFVGTLGMVVGGLTIGGSARYWWIGGPAAAALAAAVLAGPGATTARDCFSRACPDHRRVCVITAGESLSRRPPEDPERPGVPGPPSPPTPQRSHGPPADEVAPARVARPENVWVPVVTFLGAGALAVKTVREHARGTPGPGLPLWPQVFLGGHVAVALTELCQALPPWDLTDPLLFVHAGLQVINLGLVFRFSEVVVYAALGGAVWISLAQVLGLRRRLHRKDPGDGARLAATLRGLFFSVYALGFGVGVLLCPPGSTGGRSGD.

Residues 1 to 21 (MLRNDSHRAVSPEDGQGRVDD) are disordered. 5 helical membrane-spanning segments follow: residues 57 to 77 (GPYA…LGFM), 90 to 110 (IYAW…SLGE), 119 to 139 (APGP…LLVL), 146 to 166 (LFLL…VGGL), and 175 to 195 (WWIG…GPGA). A disordered region spans residues 217-254 (AGESLSRRPPEDPERPGVPGPPSPPTPQRSHGPPADEV). Basic and acidic residues predominate over residues 221–231 (LSRRPPEDPER). Residues 232–243 (PGVPGPPSPPTP) show a composition bias toward pro residues. A run of 5 helical transmembrane segments spans residues 263 to 283 (ENVW…VKTV), 291 to 311 (PGPG…AVAL), 323 to 343 (LTDP…GLVF), 348 to 368 (VVVY…VLGL), and 389 to 409 (GLFF…CPPG).

Belongs to the alphaherpesvirinae HHV-1 UL43 family.

It is found in the membrane. This chain is Membrane protein UL43, found in Human herpesvirus 1 (strain 17) (HHV-1).